Consider the following 483-residue polypeptide: Glutamyl-tRNA(Gln) amidotransferase subunit A (483 aa).

Active-site charge relay system residues include Lys76 and Ser151. Ser175 serves as the catalytic Acyl-ester intermediate.

It belongs to the amidase family. GatA subfamily. As to quaternary structure, heterotrimer of A, B and C subunits.

The catalysed reaction is L-glutamyl-tRNA(Gln) + L-glutamine + ATP + H2O = L-glutaminyl-tRNA(Gln) + L-glutamate + ADP + phosphate + H(+). Allows the formation of correctly charged Gln-tRNA(Gln) through the transamidation of misacylated Glu-tRNA(Gln) in organisms which lack glutaminyl-tRNA synthetase. The reaction takes place in the presence of glutamine and ATP through an activated gamma-phospho-Glu-tRNA(Gln). The chain is Glutamyl-tRNA(Gln) amidotransferase subunit A from Pseudomonas putida (strain ATCC 700007 / DSM 6899 / JCM 31910 / BCRC 17059 / LMG 24140 / F1).